The following is a 598-amino-acid chain: Elongation factor 4 (598 aa).

In terms of domain architecture, tr-type G spans 2-183; that stretch reads KHIRNFCIIA…AIIEKIPHPK (182 aa). Residues 14–19 and 130–133 each bind GTP; these read DHGKST and NKVD.

The protein belongs to the TRAFAC class translation factor GTPase superfamily. Classic translation factor GTPase family. LepA subfamily.

It is found in the cell inner membrane. It catalyses the reaction GTP + H2O = GDP + phosphate + H(+). Its function is as follows. Required for accurate and efficient protein synthesis under certain stress conditions. May act as a fidelity factor of the translation reaction, by catalyzing a one-codon backward translocation of tRNAs on improperly translocated ribosomes. Back-translocation proceeds from a post-translocation (POST) complex to a pre-translocation (PRE) complex, thus giving elongation factor G a second chance to translocate the tRNAs correctly. Binds to ribosomes in a GTP-dependent manner. This Flavobacterium psychrophilum (strain ATCC 49511 / DSM 21280 / CIP 103535 / JIP02/86) protein is Elongation factor 4.